A 151-amino-acid polypeptide reads, in one-letter code: Putative pre-16S rRNA nuclease (151 aa).

Belongs to the YqgF nuclease family.

The protein localises to the cytoplasm. Could be a nuclease involved in processing of the 5'-end of pre-16S rRNA. The sequence is that of Putative pre-16S rRNA nuclease from Neisseria meningitidis serogroup C (strain 053442).